The sequence spans 328 residues: Ferredoxin--NADP reductase (328 aa).

6 residues coordinate FAD: serine 14, glutamate 33, glutamine 41, tyrosine 46, isoleucine 90, and phenylalanine 126.

It belongs to the ferredoxin--NADP reductase type 2 family. As to quaternary structure, homodimer. FAD serves as cofactor.

It carries out the reaction 2 reduced [2Fe-2S]-[ferredoxin] + NADP(+) + H(+) = 2 oxidized [2Fe-2S]-[ferredoxin] + NADPH. The sequence is that of Ferredoxin--NADP reductase from Mycoplasmoides gallisepticum (strain R(low / passage 15 / clone 2)) (Mycoplasma gallisepticum).